The primary structure comprises 233 residues: Ribonuclease 3 (233 aa).

Residues 5-127 form the RNase III domain; sequence LERLCRKLGY…VIGAVYLDGG (123 aa). Glu-40 contributes to the Mg(2+) binding site. Asp-44 is an active-site residue. Residues Asp-113 and Glu-116 each contribute to the Mg(2+) site. Glu-116 is a catalytic residue. A DRBM domain is found at 156–226; sequence DPKTRLQEYL…ATRALALLLA (71 aa).

The protein belongs to the ribonuclease III family. In terms of assembly, homodimer. It depends on Mg(2+) as a cofactor.

The protein resides in the cytoplasm. The catalysed reaction is Endonucleolytic cleavage to 5'-phosphomonoester.. Functionally, digests double-stranded RNA. Involved in the processing of primary rRNA transcript to yield the immediate precursors to the large and small rRNAs (23S and 16S). Processes some mRNAs, and tRNAs when they are encoded in the rRNA operon. Processes pre-crRNA and tracrRNA of type II CRISPR loci if present in the organism. The sequence is that of Ribonuclease 3 from Nitrosococcus oceani (strain ATCC 19707 / BCRC 17464 / JCM 30415 / NCIMB 11848 / C-107).